The sequence spans 408 residues: tRNA(Met) cytidine acetate ligase (408 aa).

ATP-binding positions include 7-20, glycine 102, asparagine 170, and 195-196; these read IVEY…HKYH and RI.

This sequence belongs to the TmcAL family.

It localises to the cytoplasm. It carries out the reaction cytidine(34) in elongator tRNA(Met) + acetate + ATP = N(4)-acetylcytidine(34) in elongator tRNA(Met) + AMP + diphosphate. In terms of biological role, catalyzes the formation of N(4)-acetylcytidine (ac(4)C) at the wobble position of elongator tRNA(Met), using acetate and ATP as substrates. First activates an acetate ion to form acetyladenylate (Ac-AMP) and then transfers the acetyl group to tRNA to form ac(4)C34. This Clostridium kluyveri (strain NBRC 12016) protein is tRNA(Met) cytidine acetate ligase.